The following is a 168-amino-acid chain: uncharacterized protein (168 aa).

CBS domains lie at 20–77 and 117–168; these read IMKK…NEDL and MTRK…EALI.

This is an uncharacterized protein from Methanocaldococcus jannaschii (strain ATCC 43067 / DSM 2661 / JAL-1 / JCM 10045 / NBRC 100440) (Methanococcus jannaschii).